Consider the following 627-residue polypeptide: Plastin-3 (627 aa).

2 consecutive EF-hand domains span residues 8–43 (EELEELREAFGKVDLNGNGFICDHELHDLFKEANLP) and 48–83 (KVREIIQKLMEEGDKNKDNMISFDEFVSIFQELKSG). Ca(2+)-binding residues include Asp-21, Asn-23, Asn-25, Glu-32, Asp-61, Asn-63, Asp-65, Met-67, and Glu-72. Actin-binding regions lie at residues 105–378 (TSEL…ALTK) and 379–624 (PENQ…GRGM). 4 consecutive Calponin-homology (CH) domains span residues 119–235 (EEER…KIGL), 263–374 (LSPE…NKYP), 393–503 (TREE…RRYT), and 515–624 (KVND…GRGM).

The protein localises to the cytoplasm. Functionally, actin-bundling protein. This Danio rerio (Zebrafish) protein is Plastin-3 (pls3).